The primary structure comprises 559 residues: Putative ankyrin repeat protein RBE_0902 (559 aa).

ANK repeat units lie at residues 11–40 (DGWT…EQAI), 46–75 (DGNT…DQAI), 81–110 (DGNT…TKQN), 158–189 (DDWT…VINH), 228–257 (NNDT…DQAI), 263–292 (DGNT…DQAI), 298–327 (YGNT…EQAI), 333–364 (QCDT…AINC), 372–402 (FGFT…EVII), and 524–554 (IDNN…WGLE).

The chain is Putative ankyrin repeat protein RBE_0902 from Rickettsia bellii (strain RML369-C).